The chain runs to 444 residues: DNA repair protein RadA (444 aa).

The C4-type zinc-finger motif lies at 10–27 (CQECGYKSVKWLGKCPSC). 91-98 (GEPGIGKS) contacts ATP. A RadA KNRFG motif motif is present at residues 247 to 251 (KNRFG). A lon-protease-like region spans residues 345-444 (DVFVNVAGGM…HIQEAIEVLF (100 aa)).

Belongs to the RecA family. RadA subfamily.

Its function is as follows. DNA-dependent ATPase involved in processing of recombination intermediates, plays a role in repairing DNA breaks. Stimulates the branch migration of RecA-mediated strand transfer reactions, allowing the 3' invading strand to extend heteroduplex DNA faster. Binds ssDNA in the presence of ADP but not other nucleotides, has ATPase activity that is stimulated by ssDNA and various branched DNA structures, but inhibited by SSB. Does not have RecA's homology-searching function. This chain is DNA repair protein RadA, found in Aquifex aeolicus (strain VF5).